Consider the following 295-residue polypeptide: GTPase Era (295 aa).

Residues 5–172 form the Era-type G domain; it reads YCGYAAIIGR…EQAVHQLMPE (168 aa). The tract at residues 13-20 is G1; the sequence is GRPNVGKS. Position 13–20 (13–20) interacts with GTP; it reads GRPNVGKS. The G2 stretch occupies residues 39–43; sequence QTTRY. Residues 60–63 are G3; that stretch reads DTPG. GTP is bound by residues 60 to 64 and 121 to 124; these read DTPGL and NKVD. The segment at 121 to 124 is G4; it reads NKVD. Residues 151 to 153 form a G5 region; the sequence is LSA. Positions 203-279 constitute a KH type-2 domain; that stretch reads LGQEIPYSLA…FLQLWVKVKS (77 aa).

Belongs to the TRAFAC class TrmE-Era-EngA-EngB-Septin-like GTPase superfamily. Era GTPase family. Monomer.

It localises to the cytoplasm. It is found in the cell inner membrane. In terms of biological role, an essential GTPase that binds both GDP and GTP, with rapid nucleotide exchange. Plays a role in 16S rRNA processing and 30S ribosomal subunit biogenesis and possibly also in cell cycle regulation and energy metabolism. The protein is GTPase Era of Coxiella burnetii (strain CbuG_Q212) (Coxiella burnetii (strain Q212)).